A 334-amino-acid polypeptide reads, in one-letter code: Tetraacyldisaccharide 4'-kinase (334 aa).

An ATP-binding site is contributed by 60–67 (TVGGTGKT).

It belongs to the LpxK family.

It catalyses the reaction a lipid A disaccharide + ATP = a lipid IVA + ADP + H(+). The protein operates within glycolipid biosynthesis; lipid IV(A) biosynthesis; lipid IV(A) from (3R)-3-hydroxytetradecanoyl-[acyl-carrier-protein] and UDP-N-acetyl-alpha-D-glucosamine: step 6/6. Transfers the gamma-phosphate of ATP to the 4'-position of a tetraacyldisaccharide 1-phosphate intermediate (termed DS-1-P) to form tetraacyldisaccharide 1,4'-bis-phosphate (lipid IVA). The protein is Tetraacyldisaccharide 4'-kinase of Stutzerimonas stutzeri (strain A1501) (Pseudomonas stutzeri).